A 305-amino-acid polypeptide reads, in one-letter code: Ribonucleoside-diphosphate reductase small subunit (305 aa).

Residues E64, E94, and H97 each contribute to the Fe cation site. Residue Y101 is part of the active site. The helical transmembrane segment at 150-170 (ILLFLLVEGIFFISSFFSIGL) threads the bilayer. 3 residues coordinate Fe cation: E157, E191, and H194.

Belongs to the ribonucleoside diphosphate reductase small chain family. In terms of assembly, heterotetramer composed of a homodimer of the large subunit (R1) and a homodimer of the small subunit (R2). Larger multisubunit protein complex are also active, composed of (R1)n(R2)n. Fe cation serves as cofactor.

The protein localises to the host membrane. The enzyme catalyses a 2'-deoxyribonucleoside 5'-diphosphate + [thioredoxin]-disulfide + H2O = a ribonucleoside 5'-diphosphate + [thioredoxin]-dithiol. Its function is as follows. Ribonucleoside-diphosphate reductase holoenzyme provides the precursors necessary for viral DNA synthesis. Allows virus growth in non-dividing cells, as well as reactivation from latency in infected hosts. Catalyzes the biosynthesis of deoxyribonucleotides from the corresponding ribonucleotides. In Saimiri sciureus (Common squirrel monkey), this protein is Ribonucleoside-diphosphate reductase small subunit.